The chain runs to 204 residues: GTP cyclohydrolase 1 (204 aa).

Zn(2+)-binding residues include Cys92, His95, and Cys165.

This sequence belongs to the GTP cyclohydrolase I family. In terms of assembly, homomer.

It catalyses the reaction GTP + H2O = 7,8-dihydroneopterin 3'-triphosphate + formate + H(+). Its pathway is cofactor biosynthesis; 7,8-dihydroneopterin triphosphate biosynthesis; 7,8-dihydroneopterin triphosphate from GTP: step 1/1. In Mycobacteroides abscessus (strain ATCC 19977 / DSM 44196 / CCUG 20993 / CIP 104536 / JCM 13569 / NCTC 13031 / TMC 1543 / L948) (Mycobacterium abscessus), this protein is GTP cyclohydrolase 1.